We begin with the raw amino-acid sequence, 208 residues long: MPVGVPKVPYRLPGESAPQWVDLYNRLYRQRLLFMGQELGDELSNQLCGIMIYLFAEDPSIPLFMYINSPGGSVTSGLGVFDIATVMMQDVTTICVGIAASMASLVLSGGSTGQRLALPHARMMIHQPEGGSRGQASDVMYESSEVERLRDIVVDCYVERTHQSRETIIIDLNRDLFMSPRQARSYGLIDAVALPAVKEEYTGFSMFS.

The Nucleophile role is filled by Ser101. The active site involves His126.

It belongs to the peptidase S14 family. Component of the chloroplastic Clp protease core complex.

The protein localises to the plastid. The protein resides in the chloroplast stroma. The enzyme catalyses Hydrolysis of proteins to small peptides in the presence of ATP and magnesium. alpha-casein is the usual test substrate. In the absence of ATP, only oligopeptides shorter than five residues are hydrolyzed (such as succinyl-Leu-Tyr-|-NHMec, and Leu-Tyr-Leu-|-Tyr-Trp, in which cleavage of the -Tyr-|-Leu- and -Tyr-|-Trp bonds also occurs).. Cleaves peptides in various proteins in a process that requires ATP hydrolysis. Has a chymotrypsin-like activity. Plays a major role in the degradation of misfolded proteins. In Nephroselmis olivacea (Green alga), this protein is ATP-dependent Clp protease proteolytic subunit.